The primary structure comprises 343 residues: Ribosomal RNA small subunit methyltransferase C (343 aa).

It belongs to the methyltransferase superfamily. RsmC family. As to quaternary structure, monomer.

The protein localises to the cytoplasm. The enzyme catalyses guanosine(1207) in 16S rRNA + S-adenosyl-L-methionine = N(2)-methylguanosine(1207) in 16S rRNA + S-adenosyl-L-homocysteine + H(+). Functionally, specifically methylates the guanine in position 1207 of 16S rRNA in the 30S particle. The chain is Ribosomal RNA small subunit methyltransferase C from Pseudoalteromonas atlantica (strain T6c / ATCC BAA-1087).